We begin with the raw amino-acid sequence, 622 residues long: Phosphomethylpyrimidine synthase (622 aa).

Substrate is bound by residues Asn-226, Met-255, Tyr-284, His-320, 340–342 (SRG), 381–384 (DGLR), and Glu-420. His-424 is a Zn(2+) binding site. Tyr-447 is a substrate binding site. A Zn(2+)-binding site is contributed by His-488. Residues Cys-568, Cys-571, and Cys-576 each coordinate [4Fe-4S] cluster.

Belongs to the ThiC family. Homodimer. The cofactor is [4Fe-4S] cluster.

The catalysed reaction is 5-amino-1-(5-phospho-beta-D-ribosyl)imidazole + S-adenosyl-L-methionine = 4-amino-2-methyl-5-(phosphooxymethyl)pyrimidine + CO + 5'-deoxyadenosine + formate + L-methionine + 3 H(+). The protein operates within cofactor biosynthesis; thiamine diphosphate biosynthesis. Its function is as follows. Catalyzes the synthesis of the hydroxymethylpyrimidine phosphate (HMP-P) moiety of thiamine from aminoimidazole ribotide (AIR) in a radical S-adenosyl-L-methionine (SAM)-dependent reaction. The polypeptide is Phosphomethylpyrimidine synthase (Ruthia magnifica subsp. Calyptogena magnifica).